A 127-amino-acid polypeptide reads, in one-letter code: Large ribosomal subunit protein bL17 (127 aa).

Belongs to the bacterial ribosomal protein bL17 family. In terms of assembly, part of the 50S ribosomal subunit. Contacts protein L32.

This Enterococcus faecalis (strain ATCC 700802 / V583) protein is Large ribosomal subunit protein bL17.